We begin with the raw amino-acid sequence, 285 residues long: Ribosomal RNA large subunit methyltransferase F (285 aa).

It belongs to the methyltransferase superfamily. METTL16/RlmF family.

It localises to the cytoplasm. It catalyses the reaction adenosine(1618) in 23S rRNA + S-adenosyl-L-methionine = N(6)-methyladenosine(1618) in 23S rRNA + S-adenosyl-L-homocysteine + H(+). In terms of biological role, specifically methylates the adenine in position 1618 of 23S rRNA. The sequence is that of Ribosomal RNA large subunit methyltransferase F from Christiangramia forsetii (strain DSM 17595 / CGMCC 1.15422 / KT0803) (Gramella forsetii).